The chain runs to 280 residues: Putative protein-tyrosine sulfotransferase (280 aa).

16 to 20 serves as a coordination point for 3'-phosphoadenylyl sulfate; that stretch reads RSGTT. Cysteine 34 and cysteine 89 are disulfide-bonded. Residue glutamate 37 is the Proton donor/acceptor of the active site. A glycan (N-linked (GlcNAc...) asparagine) is linked at asparagine 57. 3 residues coordinate 3'-phosphoadenylyl sulfate: arginine 116, serine 124, and arginine 128. Asparagine 136 carries an N-linked (GlcNAc...) asparagine glycan. Cysteines 158 and 165 form a disulfide. Residues tyrosine 170 and 215–224 contribute to the 3'-phosphoadenylyl sulfate site; that span reads SASQVKNSIN.

The protein belongs to the protein sulfotransferase family.

It carries out the reaction L-tyrosyl-[protein] + 3'-phosphoadenylyl sulfate = O-sulfo-L-tyrosine-[protein] + adenosine 3',5'-bisphosphate + H(+). Functionally, catalyzes the O-sulfation of tyrosine residues within acidic motifs of polypeptides, using 3'-phosphoadenylyl sulfate (PAPS) as cosubstrate. The chain is Putative protein-tyrosine sulfotransferase from Caenorhabditis briggsae.